Reading from the N-terminus, the 62-residue chain is Small ribosomal subunit protein eS27 (62 aa).

Zn(2+)-binding residues include cysteine 17, cysteine 20, cysteine 36, and cysteine 39. The C4-type zinc-finger motif lies at 17-39 (CNDCENEQIIFGSASRKITCVVC).

Belongs to the eukaryotic ribosomal protein eS27 family. As to quaternary structure, part of the 30S ribosomal subunit. Zn(2+) serves as cofactor.

This is Small ribosomal subunit protein eS27 from Methanosarcina barkeri (strain Fusaro / DSM 804).